Consider the following 400-residue polypeptide: Argininosuccinate synthase (400 aa).

Residues Ala9 to Ser17 and Ala37 each bind ATP. Tyr88 is an L-citrulline binding site. Gly118 is a binding site for ATP. 3 residues coordinate L-aspartate: Thr120, Asn124, and Asp125. Asn124 serves as a coordination point for L-citrulline. Positions 128, 176, 185, 261, and 273 each coordinate L-citrulline.

This sequence belongs to the argininosuccinate synthase family. Type 1 subfamily. As to quaternary structure, homotetramer.

It localises to the cytoplasm. It catalyses the reaction L-citrulline + L-aspartate + ATP = 2-(N(omega)-L-arginino)succinate + AMP + diphosphate + H(+). It participates in amino-acid biosynthesis; L-arginine biosynthesis; L-arginine from L-ornithine and carbamoyl phosphate: step 2/3. The chain is Argininosuccinate synthase from Prochlorococcus marinus (strain MIT 9211).